The primary structure comprises 66 residues: DNA-directed RNA polymerase subunit Rpo10 (66 aa).

The Zn(2+) site is built by C7, C10, C47, and C48.

Belongs to the archaeal Rpo10/eukaryotic RPB10 RNA polymerase subunit family. In terms of assembly, part of the RNA polymerase complex. The cofactor is Zn(2+).

It localises to the cytoplasm. The catalysed reaction is RNA(n) + a ribonucleoside 5'-triphosphate = RNA(n+1) + diphosphate. In terms of biological role, DNA-dependent RNA polymerase (RNAP) catalyzes the transcription of DNA into RNA using the four ribonucleoside triphosphates as substrates. The chain is DNA-directed RNA polymerase subunit Rpo10 from Haloarcula marismortui (strain ATCC 43049 / DSM 3752 / JCM 8966 / VKM B-1809) (Halobacterium marismortui).